We begin with the raw amino-acid sequence, 278 residues long: Energy-coupling factor transporter ATP-binding protein EcfA (278 aa).

The ABC transporter domain occupies 5–240 (LETKNLVYNY…KEVIDEADLR (236 aa)). Residue 38–45 (GHNGAGKS) coordinates ATP.

Belongs to the ABC transporter superfamily. Energy-coupling factor EcfA family. Forms a stable energy-coupling factor (ECF) transporter complex composed of 2 membrane-embedded substrate-binding proteins (S component), 2 ATP-binding proteins (A component) and 2 transmembrane proteins (T component).

It is found in the cell membrane. Its function is as follows. ATP-binding (A) component of a common energy-coupling factor (ECF) ABC-transporter complex. Unlike classic ABC transporters this ECF transporter provides the energy necessary to transport a number of different substrates. The polypeptide is Energy-coupling factor transporter ATP-binding protein EcfA (Methanosphaera stadtmanae (strain ATCC 43021 / DSM 3091 / JCM 11832 / MCB-3)).